The following is a 495-amino-acid chain: Probable cytosol aminopeptidase (495 aa).

2 residues coordinate Mn(2+): Lys-266 and Asp-271. The active site involves Lys-278. Mn(2+) is bound by residues Asp-289, Asp-348, and Glu-350. The active site involves Arg-352.

Belongs to the peptidase M17 family. It depends on Mn(2+) as a cofactor.

The protein localises to the cytoplasm. The catalysed reaction is Release of an N-terminal amino acid, Xaa-|-Yaa-, in which Xaa is preferably Leu, but may be other amino acids including Pro although not Arg or Lys, and Yaa may be Pro. Amino acid amides and methyl esters are also readily hydrolyzed, but rates on arylamides are exceedingly low.. It carries out the reaction Release of an N-terminal amino acid, preferentially leucine, but not glutamic or aspartic acids.. In terms of biological role, presumably involved in the processing and regular turnover of intracellular proteins. Catalyzes the removal of unsubstituted N-terminal amino acids from various peptides. The sequence is that of Probable cytosol aminopeptidase from Pseudomonas paraeruginosa (strain DSM 24068 / PA7) (Pseudomonas aeruginosa (strain PA7)).